The primary structure comprises 608 residues: Chaperone protein DnaK (608 aa).

A Phosphothreonine; by autocatalysis modification is found at Thr175.

The protein belongs to the heat shock protein 70 family.

Functionally, acts as a chaperone. This chain is Chaperone protein DnaK, found in Finegoldia magna (strain ATCC 29328 / DSM 20472 / WAL 2508) (Peptostreptococcus magnus).